A 194-amino-acid polypeptide reads, in one-letter code: MLEKIAEVQKKLSKRIVEKEVRMVSKIAAVDVSYKGNKARVALVICSFPDCKVLKTKVLETEVSFPYIPTFFFLRETRPILLVTKGEEFDVLIVEGHGKAHPRKYGLASHIGLILGKPTIGVAKKLLRGTPENSYRKVGKAYVSVGNMITLKDAVRIIEKLLDGGYPKPLKLADKLSKGKISEDENTLPSDKTS.

Positions 31 and 95 each coordinate Mg(2+).

The protein belongs to the endonuclease V family. Mg(2+) is required as a cofactor.

The protein resides in the cytoplasm. It catalyses the reaction Endonucleolytic cleavage at apurinic or apyrimidinic sites to products with a 5'-phosphate.. DNA repair enzyme involved in the repair of deaminated bases. Selectively cleaves double-stranded DNA at the second phosphodiester bond 3' to a deoxyinosine leaving behind the intact lesion on the nicked DNA. The polypeptide is Endonuclease V (Pyrococcus abyssi (strain GE5 / Orsay)).